The following is a 336-amino-acid chain: Ferredoxin--NADP reductase (336 aa).

7 residues coordinate FAD: Glu34, Gln42, Tyr47, Val87, Phe121, Asp286, and Ser326.

It belongs to the ferredoxin--NADP reductase type 2 family. Homodimer. FAD serves as cofactor.

It catalyses the reaction 2 reduced [2Fe-2S]-[ferredoxin] + NADP(+) + H(+) = 2 oxidized [2Fe-2S]-[ferredoxin] + NADPH. The chain is Ferredoxin--NADP reductase from Leuconostoc mesenteroides subsp. mesenteroides (strain ATCC 8293 / DSM 20343 / BCRC 11652 / CCM 1803 / JCM 6124 / NCDO 523 / NBRC 100496 / NCIMB 8023 / NCTC 12954 / NRRL B-1118 / 37Y).